A 331-amino-acid chain; its full sequence is Minor capsid protein A1 (331 aa).

It is found in the virion. In terms of biological role, minor capsid protein. The protein is Minor capsid protein A1 of Escherichia coli (Bacteriophage SP).